Reading from the N-terminus, the 403-residue chain is Casein kinase II subunit alpha-2 (403 aa).

An N-terminal signal peptide occupies residues 1–31 (MHLIFFFSYFLRRYLLLLCAILILRAPLAHS). In terms of domain architecture, Protein kinase spans 104 to 389 (YEVVRKVGRG…AKEAMAHPYF (286 aa)). ATP is bound by residues 110 to 118 (VGRGKYSEV) and lysine 133. N-linked (GlcNAc...) asparagine glycosylation occurs at asparagine 182. The active-site Proton acceptor is aspartate 221.

The protein belongs to the protein kinase superfamily. Ser/Thr protein kinase family. CK2 subfamily. As to quaternary structure, heterotetramer of two catalytic alpha subunits and two regulatory beta subunits. As to expression, seems to be present in all plant organs. But seems to be more expressed than CKA1.

It is found in the nucleus. It localises to the nucleolus. It catalyses the reaction L-seryl-[protein] + ATP = O-phospho-L-seryl-[protein] + ADP + H(+). The enzyme catalyses L-threonyl-[protein] + ATP = O-phospho-L-threonyl-[protein] + ADP + H(+). In terms of biological role, casein kinases are operationally defined by their preferential utilization of acidic proteins such as caseins as substrates. The alpha chain contains the catalytic site. The tetrameric holoenzyme CK2, composed of two alpha and two beta subunits, phosphorylates the transcription factor PIF1 after an exposure to light, resulting in a proteasome-dependent degradation of PIF1 and promotion of photomorphogenesis. CK2 phosphorylates translation initiation factors. May participate in the regulation of the initiation of translation. Acts as circadian clock component that maintains the correct period length through phosphorylation of CCA1. May act as an ectokinase that phosphorylates several extracellular proteins. In Arabidopsis thaliana (Mouse-ear cress), this protein is Casein kinase II subunit alpha-2.